A 95-amino-acid chain; its full sequence is Small ribosomal subunit protein bS18 (95 aa).

Belongs to the bacterial ribosomal protein bS18 family. Part of the 30S ribosomal subunit. Forms a tight heterodimer with protein bS6.

Functionally, binds as a heterodimer with protein bS6 to the central domain of the 16S rRNA, where it helps stabilize the platform of the 30S subunit. The protein is Small ribosomal subunit protein bS18 of Rickettsia africae (strain ESF-5).